We begin with the raw amino-acid sequence, 862 residues long: Eukaryotic translation initiation factor 3 subunit C (862 aa).

A compositionally biased stretch (gly residues) spans 1-10; it reads MSRFFYGGGS. The interval 1–81 is disordered; the sequence is MSRFFYGGGS…DEEKTTVVKS (81 aa). A compositionally biased stretch (acidic residues) spans 16–52; it reads SSDEEELYERDEEEQSEEEESSEEEETSEEGSDDEEG. One can recognise a PCI domain in the interval 601 to 775; it reads FHMHINLELL…GAIVFRKGVE (175 aa). Positions 814 to 862 are disordered; sequence RDQGAGARGGRGGGRGGHARGGARFPGQQGRRPGGQQFGGGALGGAIKA. Over residues 819–833 the composition is skewed to gly residues; it reads GARGGRGGGRGGHAR. Over residues 835-844 the composition is skewed to low complexity; the sequence is GARFPGQQGR. The span at 845–862 shows a compositional bias: gly residues; sequence RPGGQQFGGGALGGAIKA.

This sequence belongs to the eIF-3 subunit C family. Component of the eukaryotic translation initiation factor 3 (eIF-3) complex.

The protein resides in the cytoplasm. Component of the eukaryotic translation initiation factor 3 (eIF-3) complex, which is involved in protein synthesis of a specialized repertoire of mRNAs and, together with other initiation factors, stimulates binding of mRNA and methionyl-tRNAi to the 40S ribosome. The eIF-3 complex specifically targets and initiates translation of a subset of mRNAs involved in cell proliferation. This Aspergillus clavatus (strain ATCC 1007 / CBS 513.65 / DSM 816 / NCTC 3887 / NRRL 1 / QM 1276 / 107) protein is Eukaryotic translation initiation factor 3 subunit C (nip1).